A 124-amino-acid chain; its full sequence is Large ribosomal subunit protein bL19 (124 aa).

It belongs to the bacterial ribosomal protein bL19 family.

Functionally, this protein is located at the 30S-50S ribosomal subunit interface and may play a role in the structure and function of the aminoacyl-tRNA binding site. This Orientia tsutsugamushi (strain Boryong) (Rickettsia tsutsugamushi) protein is Large ribosomal subunit protein bL19.